We begin with the raw amino-acid sequence, 352 residues long: Neutral protease 2 homolog ATEG_04941 (352 aa).

The first 19 residues, 1–19, serve as a signal peptide directing secretion; the sequence is MRFTALATAILPLACNVLA. The propeptide occupies 20–175; that stretch reads LPAKTGEAPK…ASAVKPLDKR (156 aa). 2 disulfides stabilise this stretch: Cys-181–Cys-253 and Cys-260–Cys-278. Residue His-303 coordinates Zn(2+). The active site involves Glu-304. 2 residues coordinate Zn(2+): His-307 and Asp-318.

This sequence belongs to the peptidase M35 family. Zn(2+) serves as cofactor.

The protein localises to the secreted. The catalysed reaction is Preferential cleavage of bonds with hydrophobic residues in P1'. Also 3-Asn-|-Gln-4 and 8-Gly-|-Ser-9 bonds in insulin B chain.. In terms of biological role, secreted metalloproteinase that allows assimilation of proteinaceous substrates. Shows high activities on basic nuclear substrates such as histone and protamine. In Aspergillus terreus (strain NIH 2624 / FGSC A1156), this protein is Neutral protease 2 homolog ATEG_04941.